A 581-amino-acid polypeptide reads, in one-letter code: uncharacterized protein (581 aa).

A signal peptide spans 1 to 28; it reads MDSKAVSPLIGFVLMLAIIMGLIGIMQA.

This is an uncharacterized protein from Archaeoglobus fulgidus (strain ATCC 49558 / DSM 4304 / JCM 9628 / NBRC 100126 / VC-16).